Reading from the N-terminus, the 74-residue chain is MNFSYSRRWLVYLTYYSPRFLYKRWFNLYILNHISNKAQFRNINKFFVERFKVERRVTNNDIGYWIEGYRYGNF.

This is an uncharacterized protein from Vaccinia virus (strain Copenhagen) (VACV).